The following is a 650-amino-acid chain: DNA ligase (650 aa).

NAD(+) contacts are provided by residues D30–D34, S79–L80, and D108. K110 acts as the N6-AMP-lysine intermediate in catalysis. The NAD(+) site is built by R131, E165, and K304. Residues C398, C401, C414, and C419 each coordinate Zn(2+). The 78-residue stretch at P573–S650 folds into the BRCT domain.

It belongs to the NAD-dependent DNA ligase family. LigA subfamily. Mg(2+) serves as cofactor. It depends on Mn(2+) as a cofactor.

The enzyme catalyses NAD(+) + (deoxyribonucleotide)n-3'-hydroxyl + 5'-phospho-(deoxyribonucleotide)m = (deoxyribonucleotide)n+m + AMP + beta-nicotinamide D-nucleotide.. Its function is as follows. DNA ligase that catalyzes the formation of phosphodiester linkages between 5'-phosphoryl and 3'-hydroxyl groups in double-stranded DNA using NAD as a coenzyme and as the energy source for the reaction. It is essential for DNA replication and repair of damaged DNA. The polypeptide is DNA ligase (Wolinella succinogenes (strain ATCC 29543 / DSM 1740 / CCUG 13145 / JCM 31913 / LMG 7466 / NCTC 11488 / FDC 602W) (Vibrio succinogenes)).